The sequence spans 103 residues: MANQRIRIRLKAFDHRLIDQSAREIVETAKRTGAHVKGPIPLPVKKEKFTILISPHVNKDARDQYEIRTHKRLMDIIDPTDKTVDALMKLDLAAGVDVQIKLY.

Belongs to the universal ribosomal protein uS10 family. As to quaternary structure, part of the 30S ribosomal subunit.

Its function is as follows. Involved in the binding of tRNA to the ribosomes. This chain is Small ribosomal subunit protein uS10, found in Alkalilimnicola ehrlichii (strain ATCC BAA-1101 / DSM 17681 / MLHE-1).